The sequence spans 545 residues: CTP synthase (545 aa).

An amidoligase domain region spans residues 1–266 (MKTNYIFVTG…DDYICKRFSL (266 aa)). Residue S14 coordinates CTP. S14 lines the UTP pocket. Residues 15-20 (SLGKGI) and D72 each bind ATP. 2 residues coordinate Mg(2+): D72 and E140. Residues 147–149 (DIE), 187–192 (KTKPTQ), and K223 each bind CTP. UTP-binding positions include 187-192 (KTKPTQ) and K223. ATP is bound at residue 239–241 (KDV). Positions 291–542 (TIGMVGKYVE…VKAAFDYQKG (252 aa)) constitute a Glutamine amidotransferase type-1 domain. G352 provides a ligand contact to L-glutamine. C379 serves as the catalytic Nucleophile; for glutamine hydrolysis. Residues 380 to 383 (LGMQ), E403, and R470 contribute to the L-glutamine site. Residues H515 and E517 contribute to the active site.

It belongs to the CTP synthase family. Homotetramer.

It catalyses the reaction UTP + L-glutamine + ATP + H2O = CTP + L-glutamate + ADP + phosphate + 2 H(+). The catalysed reaction is L-glutamine + H2O = L-glutamate + NH4(+). The enzyme catalyses UTP + NH4(+) + ATP = CTP + ADP + phosphate + 2 H(+). Its pathway is pyrimidine metabolism; CTP biosynthesis via de novo pathway; CTP from UDP: step 2/2. Its activity is regulated as follows. Allosterically activated by GTP, when glutamine is the substrate; GTP has no effect on the reaction when ammonia is the substrate. The allosteric effector GTP functions by stabilizing the protein conformation that binds the tetrahedral intermediate(s) formed during glutamine hydrolysis. Inhibited by the product CTP, via allosteric rather than competitive inhibition. Its function is as follows. Catalyzes the ATP-dependent amination of UTP to CTP with either L-glutamine or ammonia as the source of nitrogen. Regulates intracellular CTP levels through interactions with the four ribonucleotide triphosphates. The chain is CTP synthase from Proteus mirabilis (strain HI4320).